A 1415-amino-acid polypeptide reads, in one-letter code: Uveal autoantigen with coiled-coil domains and ankyrin repeats (1415 aa).

ANK repeat units lie at residues 69-98 (EGRS…DITT), 102-131 (AGRN…PTEH), 135-164 (QGRT…SVNA), 168-197 (DGRT…EINS), and 201-230 (QNRT…DVSL). The stretch at 288 to 376 (VKSSQREHRN…TIESLKNRFK (89 aa)) forms a coiled coil. An ANK 6 repeat occupies 617-646 (ELLAKLTLSVPTEKFESMKSLLSSEVNEKV). Residues 759 to 1381 (TVEELKKQLL…TDRQHQEVIA (623 aa)) adopt a coiled-coil conformation. Lysine 1034 is covalently cross-linked (Glycyl lysine isopeptide (Lys-Gly) (interchain with G-Cter in SUMO2)). Basic and acidic residues predominate over residues 1186 to 1201 (LREKEEESQNKTEEVS). The tract at residues 1186–1205 (LREKEEESQNKTEEVSKLQS) is disordered.

Component of the apoptosome complex, composed of APAF1, pro-caspase-9 and UACA. In the complex, it probably interacts directly with APAF1. Interacts with LGALS3, ARF6 and ACTB. Interacts with RAB39A. As to expression, highly expressed in adrenal, testis, kidney and large intestine.

Its subcellular location is the nucleus. The protein resides in the cytoplasm. It is found in the cytoskeleton. Functionally, regulates APAF1 expression and plays an important role in the regulation of stress-induced apoptosis. Promotes apoptosis by regulating three pathways, apoptosome up-regulation, LGALS3/galectin-3 down-regulation and NF-kappa-B inactivation. Regulates the redistribution of APAF1 into the nucleus after proapoptotic stress. Down-regulates the expression of LGALS3 by inhibiting NFKB1. In terms of biological role, modulates isoactin dynamics to regulate the morphological alterations required for cell growth and motility. Interaction with ARF6 may modulate cell shape and motility after injury. May be involved in multiple neurite formation. The polypeptide is Uveal autoantigen with coiled-coil domains and ankyrin repeats (UACA) (Canis lupus familiaris (Dog)).